A 503-amino-acid polypeptide reads, in one-letter code: LEM domain-containing protein 2 (503 aa).

At alanine 2 the chain carries N-acetylalanine. Positions 2-42 constitute an LEM domain; the sequence is AGLSDLELRRELQALGFQPGPITDTTRDVYRNKLRRLRGEA. A compositionally biased stretch (basic and acidic residues) spans 42-74; sequence ARLRDEERLREEARPRGEERLREEARLREDAPL. Disordered regions lie at residues 42 to 97 and 127 to 157; these read ARLR…SGSA and AQLR…GPGL. Positions 74-130 are required for nuclear retention and interaction with LMNA isoform C; that stretch reads LRARPAAASPRAEPWLSQPASGSAYATPGAYGDIRPSAASWVGSRGLAYPARPAQLR. Positions 75 to 87 are enriched in low complexity; the sequence is RARPAAASPRAEP. Serine 166 and serine 175 each carry phosphoserine. The segment at 172 to 198 is disordered; it reads LPSSLLGPDPRPGLRATRAGPAGAARA. Residues 184-197 show a composition bias toward low complexity; the sequence is GLRATRAGPAGAAR. 2 helical membrane passes run 213–233 and 377–397; these read LLLW…WVKM and VTNV…LILL. The winged-Helix (WH) stretch occupies residues 395 to 503; that stretch reads ILLKYRWRKL…KPSSFSDSER (109 aa). 3 positions are modified to phosphoserine: serine 497, serine 499, and serine 501.

Interacts (via N-terminus) with LMNA isoform C (via C-terminus) (in vitro). Interacts (via LEM domain) with BANF1. Interacts (via C-terminus) with CHMP7. Interacts (via N-terminus) with tubulin; the interaction causes microtubule bundling and stabilization (in vitro). Phosphorylated; strongly phosphorylated in mitosis compared to G1/S. Ubiquitously expressed, including bone marrow, brain, kidney, colon, skeletal muscle, thymus, testis and uterus.

It is found in the nucleus inner membrane. It localises to the nucleus envelope. The protein localises to the cytoplasm. Its subcellular location is the cytoskeleton. The protein resides in the spindle. In terms of biological role, nuclear lamina-associated inner nuclear membrane protein that is involved in nuclear structure organization, maintenance of nuclear envelope (NE) integrity and NE reformation after mitosis. Plays a role as transmembrane adapter for the endosomal sorting complexes required for transport (ESCRT), and is thereby involved in ESCRT-mediated NE reformation. Promotes ESCRT-mediated NE closure by recruiting CHMP7 and downstream ESCRT-III proteins IST1/CHMP8 and CHMP2A to the reforming NE during anaphase. During nuclear reassembly, condenses into a liquid-like coating around microtubule spindles and coassembles with CHMP7 to form a macromolecular O-ring seal at the confluence between membranes, chromatin, and the spindle to facilitate early nuclear sealing. Plays a role in the organization of heterochromatin associated with the NE and in the maintenance of NE organization under mechanical stress. Required for embryonic development and involved in regulation of several signaling pathways such as MAPK and AKT. Required for myoblast differentiation involving regulation of ERK signaling. Essential for cardiac homeostasis and proper heart function. This is LEM domain-containing protein 2 (LEMD2) from Homo sapiens (Human).